A 795-amino-acid chain; its full sequence is Phenylalanine--tRNA ligase beta subunit (795 aa).

The tRNA-binding domain occupies 39–148 (AGTFNGVKVG…IDAPIGMDFR (110 aa)). Positions 401-476 (PKPNKVALRR…RIYGYDNIPN (76 aa)) constitute a B5 domain. 4 residues coordinate Mg(2+): Asp454, Asp460, Glu463, and Glu464. The region spanning 701–794 (SKFPANRRDI…VSEKFGASLR (94 aa)) is the FDX-ACB domain.

This sequence belongs to the phenylalanyl-tRNA synthetase beta subunit family. Type 1 subfamily. As to quaternary structure, tetramer of two alpha and two beta subunits. Mg(2+) serves as cofactor.

The protein localises to the cytoplasm. It carries out the reaction tRNA(Phe) + L-phenylalanine + ATP = L-phenylalanyl-tRNA(Phe) + AMP + diphosphate + H(+). The sequence is that of Phenylalanine--tRNA ligase beta subunit from Vibrio vulnificus (strain YJ016).